Consider the following 385-residue polypeptide: S-adenosylmethionine synthase (385 aa).

His-16 is an ATP binding site. Residue Asp-18 participates in Mg(2+) binding. Residue Glu-44 participates in K(+) binding. Residues Glu-57 and Gln-100 each contribute to the L-methionine site. The segment at 100 to 110 is flexible loop; that stretch reads QSPDINQGVDR. ATP is bound by residues 164–166, 230–231, Asp-239, 245–246, Ala-262, and Lys-266; these read DGK, KF, and RK. Asp-239 lines the L-methionine pocket. L-methionine is bound at residue Lys-270.

Belongs to the AdoMet synthase family. Homotetramer; dimer of dimers. It depends on Mg(2+) as a cofactor. K(+) serves as cofactor.

Its subcellular location is the cytoplasm. The enzyme catalyses L-methionine + ATP + H2O = S-adenosyl-L-methionine + phosphate + diphosphate. It participates in amino-acid biosynthesis; S-adenosyl-L-methionine biosynthesis; S-adenosyl-L-methionine from L-methionine: step 1/1. Catalyzes the formation of S-adenosylmethionine (AdoMet) from methionine and ATP. The overall synthetic reaction is composed of two sequential steps, AdoMet formation and the subsequent tripolyphosphate hydrolysis which occurs prior to release of AdoMet from the enzyme. The sequence is that of S-adenosylmethionine synthase from Helicobacter pylori (strain Shi470).